The primary structure comprises 504 residues: Glucosaminyl-phosphatidylinositol-acyltransferase PIGW (504 aa).

Over 1 to 21 (MSEKQMKEAFVSNLNGTTVLE) the chain is Lumenal. A glycan (N-linked (GlcNAc...) asparagine) is linked at N15. Residues 22 to 42 (ITQGLCFPAFCILCRGFLIIF) traverse the membrane as a helical segment. Over 43–56 (SQYLCSFSPTWKTR) the chain is Cytoplasmic. A helical transmembrane segment spans residues 57 to 75 (FLTDFVVLIVPMVATLTIW). Residues 76 to 81 (ASFILL) lie on the Lumenal side of the membrane. The chain crosses the membrane as a helical span at residues 82–98 (ELLGVIIFGAGLLYQIY). Residues 99-131 (RRRTCYARLPFLKILEKFLNISLESEYNPAISC) lie on the Cytoplasmic side of the membrane. The helical transmembrane segment at 132 to 152 (FRVITSAFTAIAILAVDFPLF) threads the bilayer. At 153 to 162 (PRRFAKTELY) the chain is on the lumenal side. Residues 163–183 (GTGAMDFGVGGFVFGSAMVCL) form a helical membrane-spanning segment. The Cytoplasmic segment spans residues 184 to 202 (EVRRRKYMEGSKLHYFTNS). Residues 203–223 (LYSVWPLVFLGIGRLAIIKSI) traverse the membrane as a helical segment. The Lumenal portion of the chain corresponds to 224–237 (GYQEHLTEYGVHWN). The helical transmembrane segment at 238 to 258 (FFFTIIVVKLITPLLLIIFPL) threads the bilayer. Over 259–260 (NK) the chain is Cytoplasmic. The chain crosses the membrane as a helical span at residues 261 to 281 (SWIIALGITVLYQLALDFTSL). Topologically, residues 282 to 305 (KRLILYGTDGSGTRVGLLNANREG) are lumenal. A helical transmembrane segment spans residues 306–326 (IISTLGYVAIHMAGVQTGLYM). The Cytoplasmic segment spans residues 327 to 338 (HKNRSHIKDLIK). A helical transmembrane segment spans residues 339–359 (VACFLLLAAISLFISLYVVQV). Over 360 to 370 (NVEAVSRRMAN) the chain is Lumenal. The helical transmembrane segment at 371–391 (LAFCIWIVASSLILLSSLLLG) threads the bilayer. Residues 392–448 (DIILSFAKFLIKGALVPCSWKLIQSPVTNKKHSESLVPEAERMEPSLCLITALNRKQ) are Cytoplasmic-facing. S416 carries the post-translational modification Phosphoserine. A helical transmembrane segment spans residues 449–469 (LIFFLLSNITTGLINLMVDTL). Residues 470-473 (HSST) are Lumenal-facing. The helical transmembrane segment at 474-494 (LWALFVVNLYMFSNCLIVYVL) threads the bilayer. The Cytoplasmic segment spans residues 495 to 504 (YLQDKTVQFW).

Belongs to the PIGW family.

It is found in the endoplasmic reticulum membrane. It functions in the pathway glycolipid biosynthesis; glycosylphosphatidylinositol-anchor biosynthesis. Its function is as follows. Acyltransferase that catalyzes the acyl transfer from an acyl-CoA at the 2-OH position of the inositol ring of glucosaminyl phosphatidylinositol (GlcN-PI) to generate glucosaminyl acyl phosphatidylinositol (GlcN-(acyl)PI) and participates in the fourth step of GPI-anchor biosynthesis. Required for the transport of GPI-anchored proteins to the plasma membrane. Acetylation during GPI-anchor biosynthesis is not essential for the subsequent mannosylation and is usually removed soon after the attachment of GPIs to proteins. This chain is Glucosaminyl-phosphatidylinositol-acyltransferase PIGW, found in Homo sapiens (Human).